The following is a 633-amino-acid chain: 1-deoxy-D-xylulose-5-phosphate synthase (633 aa).

Residues H72 and 113-115 (GHS) each bind thiamine diphosphate. Position 144 (D144) interacts with Mg(2+). Thiamine diphosphate contacts are provided by residues 145 to 146 (GA), N173, Y284, and E367. N173 is a binding site for Mg(2+).

This sequence belongs to the transketolase family. DXPS subfamily. Homodimer. Requires Mg(2+) as cofactor. The cofactor is thiamine diphosphate.

The enzyme catalyses D-glyceraldehyde 3-phosphate + pyruvate + H(+) = 1-deoxy-D-xylulose 5-phosphate + CO2. Its pathway is metabolic intermediate biosynthesis; 1-deoxy-D-xylulose 5-phosphate biosynthesis; 1-deoxy-D-xylulose 5-phosphate from D-glyceraldehyde 3-phosphate and pyruvate: step 1/1. Catalyzes the acyloin condensation reaction between C atoms 2 and 3 of pyruvate and glyceraldehyde 3-phosphate to yield 1-deoxy-D-xylulose-5-phosphate (DXP). The chain is 1-deoxy-D-xylulose-5-phosphate synthase from Bacillus velezensis (strain DSM 23117 / BGSC 10A6 / LMG 26770 / FZB42) (Bacillus amyloliquefaciens subsp. plantarum).